Here is a 260-residue protein sequence, read N- to C-terminus: Adenosylcobinamide-GDP ribazoletransferase (260 aa).

6 helical membrane passes run 40–60 (AFPF…LLLL), 64–84 (TDPL…TGAL), 117–137 (YGAI…AAII), 142–162 (PLAA…AIAW), 188–208 (HFAL…PFGL), and 210–230 (PLVA…VFIR).

The protein belongs to the CobS family. The cofactor is Mg(2+).

It localises to the cell inner membrane. The enzyme catalyses alpha-ribazole + adenosylcob(III)inamide-GDP = adenosylcob(III)alamin + GMP + H(+). It catalyses the reaction alpha-ribazole 5'-phosphate + adenosylcob(III)inamide-GDP = adenosylcob(III)alamin 5'-phosphate + GMP + H(+). Its pathway is cofactor biosynthesis; adenosylcobalamin biosynthesis; adenosylcobalamin from cob(II)yrinate a,c-diamide: step 7/7. Functionally, joins adenosylcobinamide-GDP and alpha-ribazole to generate adenosylcobalamin (Ado-cobalamin). Also synthesizes adenosylcobalamin 5'-phosphate from adenosylcobinamide-GDP and alpha-ribazole 5'-phosphate. In Rhizobium etli (strain ATCC 51251 / DSM 11541 / JCM 21823 / NBRC 15573 / CFN 42), this protein is Adenosylcobinamide-GDP ribazoletransferase.